Reading from the N-terminus, the 195-residue chain is ATP-dependent Clp protease proteolytic subunit (195 aa).

Ser-98 (nucleophile) is an active-site residue. His-123 is a catalytic residue.

This sequence belongs to the peptidase S14 family. In terms of assembly, fourteen ClpP subunits assemble into 2 heptameric rings which stack back to back to give a disk-like structure with a central cavity, resembling the structure of eukaryotic proteasomes.

The protein resides in the cytoplasm. It carries out the reaction Hydrolysis of proteins to small peptides in the presence of ATP and magnesium. alpha-casein is the usual test substrate. In the absence of ATP, only oligopeptides shorter than five residues are hydrolyzed (such as succinyl-Leu-Tyr-|-NHMec, and Leu-Tyr-Leu-|-Tyr-Trp, in which cleavage of the -Tyr-|-Leu- and -Tyr-|-Trp bonds also occurs).. Its function is as follows. Cleaves peptides in various proteins in a process that requires ATP hydrolysis. Has a chymotrypsin-like activity. Plays a major role in the degradation of misfolded proteins. The protein is ATP-dependent Clp protease proteolytic subunit of Helicobacter pylori (strain Shi470).